Consider the following 249-residue polypeptide: Domoic acid biosynthesis cluster protein B (249 aa).

Unknown function: part of the gene cluster that mediates the biosynthesis of domoic acid (DA) and derivatives, natural products with neurochemical activity acting as ionotropic glutamate receptor (iGluR) agonists, thus being neurotoxins causing amnesic shellfish poisoning (ASP). The chain is Domoic acid biosynthesis cluster protein B from Pseudo-nitzschia multiseries (Marine planktonic diatom).